The sequence spans 71 residues: NAD(P)H-quinone oxidoreductase subunit O (71 aa).

Belongs to the complex I NdhO subunit family. In terms of assembly, NDH-1 can be composed of about 15 different subunits; different subcomplexes with different compositions have been identified which probably have different functions.

The protein localises to the cellular thylakoid membrane. It catalyses the reaction a plastoquinone + NADH + (n+1) H(+)(in) = a plastoquinol + NAD(+) + n H(+)(out). The enzyme catalyses a plastoquinone + NADPH + (n+1) H(+)(in) = a plastoquinol + NADP(+) + n H(+)(out). Its function is as follows. NDH-1 shuttles electrons from an unknown electron donor, via FMN and iron-sulfur (Fe-S) centers, to quinones in the respiratory and/or the photosynthetic chain. The immediate electron acceptor for the enzyme in this species is believed to be plastoquinone. Couples the redox reaction to proton translocation, and thus conserves the redox energy in a proton gradient. Cyanobacterial NDH-1 also plays a role in inorganic carbon-concentration. In Picosynechococcus sp. (strain ATCC 27264 / PCC 7002 / PR-6) (Agmenellum quadruplicatum), this protein is NAD(P)H-quinone oxidoreductase subunit O.